Here is an 842-residue protein sequence, read N- to C-terminus: Synaptonemal complex protein 2-like (842 aa).

Disordered stretches follow at residues 451 to 473 (GSLE…EPEQ), 505 to 560 (FARD…KQRV), 619 to 666 (STQK…SSLE), and 715 to 738 (EDAP…PGSV). 2 stretches are compositionally biased toward basic and acidic residues: residues 458 to 470 (TEER…KQDE) and 505 to 525 (FARD…HDLL). The segment covering 543-559 (NHKRKSLRTYSQRKKQR) has biased composition (basic residues). Basic and acidic residues-rich tracts occupy residues 624–633 (GLEKPERRGS) and 643–655 (RVTD…EPRS).

The protein belongs to the SYCP2 family. As to expression, specifically expressed in oocytes.

It is found in the nucleus. The protein resides in the chromosome. The protein localises to the centromere. Its function is as follows. Oocyte-specific protein that localizes to centromeres at the dictyate stage and regulates the survival of primordial oocytes. The polypeptide is Synaptonemal complex protein 2-like (Mus musculus (Mouse)).